A 673-amino-acid polypeptide reads, in one-letter code: UvrABC system protein B (673 aa).

Positions glutamate 26–proline 415 constitute a Helicase ATP-binding domain. Glycine 39–threonine 46 provides a ligand contact to ATP. The short motif at tyrosine 92 to valine 115 is the Beta-hairpin element. In terms of domain architecture, Helicase C-terminal spans glutamine 431–leucine 597. Positions alanine 608–methionine 627 are disordered. Positions glutamine 633–leucine 668 constitute a UVR domain.

This sequence belongs to the UvrB family. As to quaternary structure, forms a heterotetramer with UvrA during the search for lesions. Interacts with UvrC in an incision complex.

The protein resides in the cytoplasm. Functionally, the UvrABC repair system catalyzes the recognition and processing of DNA lesions. A damage recognition complex composed of 2 UvrA and 2 UvrB subunits scans DNA for abnormalities. Upon binding of the UvrA(2)B(2) complex to a putative damaged site, the DNA wraps around one UvrB monomer. DNA wrap is dependent on ATP binding by UvrB and probably causes local melting of the DNA helix, facilitating insertion of UvrB beta-hairpin between the DNA strands. Then UvrB probes one DNA strand for the presence of a lesion. If a lesion is found the UvrA subunits dissociate and the UvrB-DNA preincision complex is formed. This complex is subsequently bound by UvrC and the second UvrB is released. If no lesion is found, the DNA wraps around the other UvrB subunit that will check the other stand for damage. This is UvrABC system protein B from Escherichia coli O6:H1 (strain CFT073 / ATCC 700928 / UPEC).